The primary structure comprises 471 residues: 3-isopropylmalate dehydratase large subunit (471 aa).

3 residues coordinate [4Fe-4S] cluster: Cys-347, Cys-407, and Cys-410.

It belongs to the aconitase/IPM isomerase family. LeuC type 1 subfamily. As to quaternary structure, heterodimer of LeuC and LeuD. Requires [4Fe-4S] cluster as cofactor.

It catalyses the reaction (2R,3S)-3-isopropylmalate = (2S)-2-isopropylmalate. It participates in amino-acid biosynthesis; L-leucine biosynthesis; L-leucine from 3-methyl-2-oxobutanoate: step 2/4. In terms of biological role, catalyzes the isomerization between 2-isopropylmalate and 3-isopropylmalate, via the formation of 2-isopropylmaleate. The sequence is that of 3-isopropylmalate dehydratase large subunit from Geobacillus sp. (strain WCH70).